Consider the following 422-residue polypeptide: Dihydroorotase (422 aa).

Positions 61 and 63 each coordinate Zn(2+). Substrate-binding positions include 63-65 (HLR) and Asn-95. Residue Asp-153 coordinates Zn(2+). Residue Asn-278 participates in substrate binding. Asp-305 lines the Zn(2+) pocket. The active site involves Asp-305. Residues His-309 and 322–323 (PG) contribute to the substrate site.

It belongs to the metallo-dependent hydrolases superfamily. DHOase family. Class I DHOase subfamily. As to quaternary structure, monomer. Forms a 1:1 stoichiometric complex with PyrB. The complex exists as an equilibrium mixture of heterohexamers, composed of 3 PyrC and 3 PyrB subunits, and dodecamers. The complex has both DHOase and ATCase activities. The cofactor is Zn(2+).

The enzyme catalyses (S)-dihydroorotate + H2O = N-carbamoyl-L-aspartate + H(+). The protein operates within pyrimidine metabolism; UMP biosynthesis via de novo pathway; (S)-dihydroorotate from bicarbonate: step 3/3. The monomer has very low activity by itself. Activated several thousandfold by formation of a complex with PyrB aspartate carbamoyltransferase (ATCase). In terms of biological role, catalyzes the reversible cyclization of carbamoyl aspartate to dihydroorotate. The chain is Dihydroorotase from Aquifex aeolicus (strain VF5).